The primary structure comprises 591 residues: Aspartate--tRNA(Asp/Asn) ligase (591 aa).

E176 is a binding site for L-aspartate. The aspartate stretch occupies residues 200-203; sequence QLFK. R222 contributes to the L-aspartate binding site. ATP contacts are provided by residues 222 to 224 and Q231; that span reads RDE. An L-aspartate-binding site is contributed by H450. Residue E484 coordinates ATP. R491 is an L-aspartate binding site. 536-539 provides a ligand contact to ATP; that stretch reads GLDR.

This sequence belongs to the class-II aminoacyl-tRNA synthetase family. Type 1 subfamily. Homodimer.

It localises to the cytoplasm. The enzyme catalyses tRNA(Asx) + L-aspartate + ATP = L-aspartyl-tRNA(Asx) + AMP + diphosphate. Aspartyl-tRNA synthetase with relaxed tRNA specificity since it is able to aspartylate not only its cognate tRNA(Asp) but also tRNA(Asn). Reaction proceeds in two steps: L-aspartate is first activated by ATP to form Asp-AMP and then transferred to the acceptor end of tRNA(Asp/Asn). This Bacillus cereus (strain AH187) protein is Aspartate--tRNA(Asp/Asn) ligase.